A 440-amino-acid polypeptide reads, in one-letter code: C-terminal-binding protein 1 (440 aa).

Residues 1 to 70 (MGSSHLLNKG…EIHEKVLNEA (70 aa)) are interaction with GLIS2 1. NAD(+)-binding positions include Ser-100, 180 to 185 (IGLGRV), Asp-204, 237 to 243 (CGLNEHN), 264 to 266 (TAR), and Asp-290. The active site involves Arg-266. The interval 288 to 360 (ALDVHESEPF…VNKDHLTAAT (73 aa)) is interaction with GLIS2 2. Glu-295 is a catalytic residue. The residue at position 300 (Ser-300) is a Phosphoserine. His-315 functions as the Proton donor in the catalytic mechanism. 315 to 318 (HAAW) serves as a coordination point for NAD(+). Positions 408-440 (SHGLPPVAHPPHAPSPGQTVKPEADRDHASDQL) are disordered. Position 422 is a phosphoserine; by HIPK2 (Ser-422). Residue Lys-428 forms a Glycyl lysine isopeptide (Lys-Gly) (interchain with G-Cter in SUMO) linkage. Basic and acidic residues predominate over residues 429–440 (PEADRDHASDQL).

It belongs to the D-isomer specific 2-hydroxyacid dehydrogenase family. In terms of assembly, homo- or heterodimer. Heterodimer with CTBP2. Interacts with PRDM16; the interaction represses white adipose tissue (WAT)-specific genes expression. Interacts with GLIS2, FOXP2, HDAC4, HDAC5, HDAC9 and ZNF217. Interacts with ELK3 (via its PXDLS motif). Interacts with RBBP8 (via its PXDLS motif); the interaction is disrupted by binding to adenovirus E1A. Interacts with FOXP1, HIPK2, PNN, NRIP1, MECOM, ZFHX1B and WIZ. Interacts with ZNF366 (via PXDLS motif). Interaction with SATB1 (non-acetylated form); the interaction stabilizes its attachment to DNA and promotes transcription repression. Interacts with BCL6; the interaction is required for BCL6 transcriptional autoinhibition and inhibition of some BCL6 target genes. Interacts with IKZF4. Interacts with MCRIP1 (unphosphorylated form, via the PXDLS motif); competitively inhibiting CTBP-ZEB1 interaction. Interacts with Bassoon/BSN; this interaction targets and anchors CTBP1 to presynapses. Interacts with SIMC1. (Microbial infection) Interacts with Epstein-Barr virus EBNA3. Interacts with Epstein-Barr virus EBNA6; this interaction leads to gene repression, but also seems to interfere with the repressive function of CtBP pre-bound to DNA, leading to EBNA6 mediated up-regulation of many cellular genes. As to quaternary structure, (Microbial infection) Interacts with adenovirus E1A protein (via its C-terminus); the interaction disrupts the interaction of CTBP1 with RBBP8. In terms of assembly, (Microbial infection) Interacts with human adenovirus 5 E1A protein; this interaction seems to potentiate viral replication. NAD(+) serves as cofactor. In terms of processing, the level of phosphorylation appears to be regulated during the cell cycle. Phosphorylation by HIPK2 on Ser-422 induces proteasomal degradation. ADP-ribosylated; when cells are exposed to brefeldin A. Post-translationally, sumoylation on Lys-428 is promoted by the E3 SUMO-protein ligase CBX4. As to expression, expressed in germinal center B-cells.

The protein resides in the cytoplasm. Its subcellular location is the nucleus. In terms of biological role, corepressor targeting diverse transcription regulators such as GLIS2 or BCL6. Has dehydrogenase activity. Involved in controlling the equilibrium between tubular and stacked structures in the Golgi complex. Functions in brown adipose tissue (BAT) differentiation. The protein is C-terminal-binding protein 1 (CTBP1) of Homo sapiens (Human).